We begin with the raw amino-acid sequence, 359 residues long: Phosphoserine aminotransferase (359 aa).

Residue R41 participates in L-glutamate binding. W101, T151, D170, and Q193 together coordinate pyridoxal 5'-phosphate. K194 carries the post-translational modification N6-(pyridoxal phosphate)lysine. Residue 235–236 participates in pyridoxal 5'-phosphate binding; the sequence is NT.

This sequence belongs to the class-V pyridoxal-phosphate-dependent aminotransferase family. SerC subfamily. In terms of assembly, homodimer. Requires pyridoxal 5'-phosphate as cofactor.

The protein localises to the cytoplasm. It carries out the reaction O-phospho-L-serine + 2-oxoglutarate = 3-phosphooxypyruvate + L-glutamate. It catalyses the reaction 4-(phosphooxy)-L-threonine + 2-oxoglutarate = (R)-3-hydroxy-2-oxo-4-phosphooxybutanoate + L-glutamate. It functions in the pathway amino-acid biosynthesis; L-serine biosynthesis; L-serine from 3-phospho-D-glycerate: step 2/3. The protein operates within cofactor biosynthesis; pyridoxine 5'-phosphate biosynthesis; pyridoxine 5'-phosphate from D-erythrose 4-phosphate: step 3/5. Catalyzes the reversible conversion of 3-phosphohydroxypyruvate to phosphoserine and of 3-hydroxy-2-oxo-4-phosphonooxybutanoate to phosphohydroxythreonine. This Laribacter hongkongensis (strain HLHK9) protein is Phosphoserine aminotransferase.